The sequence spans 134 residues: MEFVMKQALGGATKDMGKMLGGDEEKDPDAAKKEEERQEALRQAEEERKAKYAKMEAEREAVRQGIRDKYGIKKKEEREAEAQAAMEANSEGSLTRPKKAIPPGCGDEVEEEDESILDTVIKYLPGPLQDMLKK.

2 disordered regions span residues methionine 1 to glutamate 60 and lysine 74 to aspartate 113. A compositionally biased stretch (basic and acidic residues) spans aspartate 15–glutamate 60. A coiled-coil region spans residues aspartate 29–lysine 69. The interval arginine 48 to tyrosine 70 is interaction with the SNARE complex.

It belongs to the complexin/synaphin family. Binds to the SNARE core complex containing SNAP25, VAMP2 and STX1A. Nervous system. In hippocampus and cerebellum, expressed mainly by inhibitory neurons. Overexpressed in substantia nigra from patients with Parkinson disease.

The protein localises to the cytoplasm. The protein resides in the cytosol. It localises to the perikaryon. It is found in the presynapse. Its function is as follows. Positively regulates a late step in exocytosis of various cytoplasmic vesicles, such as synaptic vesicles and other secretory vesicles. Organizes the SNAREs into a cross-linked zigzag topology that, when interposed between the vesicle and plasma membranes, is incompatible with fusion, thereby preventing SNAREs from releasing neurotransmitters until an action potential arrives at the synapse. Also involved in glucose-induced secretion of insulin by pancreatic beta-cells. Essential for motor behavior. The chain is Complexin-1 (CPLX1) from Homo sapiens (Human).